A 294-amino-acid chain; its full sequence is 4-hydroxy-tetrahydrodipicolinate synthase (294 aa).

Position 45 (T45) interacts with pyruvate. Y133 functions as the Proton donor/acceptor in the catalytic mechanism. K161 (schiff-base intermediate with substrate) is an active-site residue. A pyruvate-binding site is contributed by I203.

The protein belongs to the DapA family. Homotetramer; dimer of dimers.

It localises to the cytoplasm. The catalysed reaction is L-aspartate 4-semialdehyde + pyruvate = (2S,4S)-4-hydroxy-2,3,4,5-tetrahydrodipicolinate + H2O + H(+). It participates in amino-acid biosynthesis; L-lysine biosynthesis via DAP pathway; (S)-tetrahydrodipicolinate from L-aspartate: step 3/4. Catalyzes the condensation of (S)-aspartate-beta-semialdehyde [(S)-ASA] and pyruvate to 4-hydroxy-tetrahydrodipicolinate (HTPA). The chain is 4-hydroxy-tetrahydrodipicolinate synthase from Shewanella sp. (strain ANA-3).